The sequence spans 172 residues: Centrin-1 (172 aa).

The interval 1-30 is disordered; it reads MASSYRKPTVASTSQKRKVGPKPELTEEQK. 4 consecutive EF-hand domains span residues 28–63, 64–99, 101–136, and 137–172; these read EQKQ…LGFE, PRKE…KMAE, DTKE…LGEN, and LTDE…TNLY. Residues D41, D43, S45, T47, and E52 each coordinate Ca(2+). 5 residues coordinate Ca(2+): D150, D152, D154, E156, and E161.

This sequence belongs to the centrin family. In terms of assembly, monomer. Interacts with CIMAP3. Interacts with USP49.

It is found in the cytoplasm. Its subcellular location is the cytoskeleton. The protein localises to the microtubule organizing center. The protein resides in the centrosome. Plays a fundamental role in microtubule-organizing center structure and function. Plays a role in sperm cilia formation. This chain is Centrin-1 (CETN1), found in Bos taurus (Bovine).